A 394-amino-acid polypeptide reads, in one-letter code: MISYLASIFLLATVSAVPSGRVEVVFPSVETSRSGVKTVKFTALDQDVELKLRSAGEILGKRFAIQDVDVESLRRKIYRDSVNGAALLIDEDGPLTIEGIVNSKLRIQPFESGRITKDGIIAHQIVEVIDDKKSYDRVAVIPENVKRNAENVSRMARDDDCIVVEYYIVTDSAFTKRFKSNSALTNYVTVMFTGVQNLMDTLELGIGVRLLGVTTFTEKTEPSFIKDNLIPGPPAAFDPDVLISAMSKYYCNHQTGLAKDTDLIFLITARGMGDPREDGTVDINTAGIANSAGVCKPCFKSGIATDDSDYNERVDTLAHESVHLLGSPHDGEGPNLVSLEGSPGAANCPAKAGYIMGNRNDKNKYKFSPCTKKCVEYLLSKPTASCIFQQCTDF.

The signal sequence occupies residues 1-16 (MISYLASIFLLATVSA). Positions 17–157 (VPSGRVEVVF…NAENVSRMAR (141 aa)) are excised as a propeptide. In terms of domain architecture, Peptidase M12B spans 162 to 391 (IVVEYYIVTD…PTASCIFQQC (230 aa)). Cys-295 and Cys-386 are oxidised to a cystine. His-319 serves as a coordination point for Zn(2+). Residue Glu-320 is part of the active site. The Zn(2+) site is built by His-323 and His-329.

Zn(2+) serves as cofactor. In terms of processing, contains 4 disulfide bonds. In terms of tissue distribution, expressed by the venom gland.

It localises to the secreted. With respect to regulation, inhibited by EDTA. Functionally, acts as a metalloprotease. Penetrates intact tissue and specifically cleaves the vesicle-associated membrane protein 2 (VAMP2) (part of the SNARE complex) involved in pancreatic secretion, thus disrupting the normal vesicular traffic. The polypeptide is Venom metalloproteinase antarease TserMP_A (Tityus serrulatus (Brazilian scorpion)).